The sequence spans 65 residues: SPbeta prophage-derived uncharacterized protein YopU (65 aa).

The protein is SPbeta prophage-derived uncharacterized protein YopU (yopU) of Bacillus subtilis (strain 168).